A 386-amino-acid polypeptide reads, in one-letter code: Succinate--CoA ligase [ADP-forming] subunit beta (386 aa).

The ATP-grasp domain occupies 9-244 (KEILRKYGVP…HDEEDPLETR (236 aa)). ATP is bound by residues K46, 53-55 (GRG), E99, C102, and E107. 2 residues coordinate Mg(2+): N199 and D213. Residues N264 and 321–323 (GIM) each bind substrate.

This sequence belongs to the succinate/malate CoA ligase beta subunit family. Heterotetramer of two alpha and two beta subunits. It depends on Mg(2+) as a cofactor.

The catalysed reaction is succinate + ATP + CoA = succinyl-CoA + ADP + phosphate. It carries out the reaction GTP + succinate + CoA = succinyl-CoA + GDP + phosphate. The protein operates within carbohydrate metabolism; tricarboxylic acid cycle; succinate from succinyl-CoA (ligase route): step 1/1. Succinyl-CoA synthetase functions in the citric acid cycle (TCA), coupling the hydrolysis of succinyl-CoA to the synthesis of either ATP or GTP and thus represents the only step of substrate-level phosphorylation in the TCA. The beta subunit provides nucleotide specificity of the enzyme and binds the substrate succinate, while the binding sites for coenzyme A and phosphate are found in the alpha subunit. In Rickettsia massiliae (strain Mtu5), this protein is Succinate--CoA ligase [ADP-forming] subunit beta.